A 448-amino-acid chain; its full sequence is Exodeoxyribonuclease 7 large subunit (448 aa).

This sequence belongs to the XseA family. In terms of assembly, heterooligomer composed of large and small subunits.

The protein localises to the cytoplasm. It carries out the reaction Exonucleolytic cleavage in either 5'- to 3'- or 3'- to 5'-direction to yield nucleoside 5'-phosphates.. Its function is as follows. Bidirectionally degrades single-stranded DNA into large acid-insoluble oligonucleotides, which are then degraded further into small acid-soluble oligonucleotides. In Nitrosomonas eutropha (strain DSM 101675 / C91 / Nm57), this protein is Exodeoxyribonuclease 7 large subunit.